The sequence spans 437 residues: Adenylosuccinate synthetase (437 aa).

GTP is bound by residues 25–31 (GDEGKGK), 53–55 (GHT), and Lys-62. Asp-26 (proton acceptor) is an active-site residue. Mg(2+) contacts are provided by Asp-26 and Gly-53. IMP-binding positions include 26 to 29 (DEGK) and 51 to 54 (NAGH). His-54 (proton donor) is an active-site residue. 4 residues coordinate IMP: Thr-141, Arg-155, Asn-232, and Thr-247. GTP is bound at residue Thr-307. 307–313 (TTTKRPR) is a binding site for substrate. Arg-311 is a binding site for IMP. Residues Arg-313, 339 to 341 (KLD), and 425 to 427 (GIG) each bind GTP.

The protein belongs to the adenylosuccinate synthetase family. As to quaternary structure, homodimer. Mg(2+) is required as a cofactor.

It is found in the cytoplasm. It catalyses the reaction IMP + L-aspartate + GTP = N(6)-(1,2-dicarboxyethyl)-AMP + GDP + phosphate + 2 H(+). It participates in purine metabolism; AMP biosynthesis via de novo pathway; AMP from IMP: step 1/2. Plays an important role in the salvage pathway for purine nucleotide biosynthesis. Catalyzes the first committed step in the biosynthesis of AMP from IMP. This is Adenylosuccinate synthetase from Plasmodium vivax (strain Salvador I).